Reading from the N-terminus, the 223-residue chain is Lipoprotein-releasing system ATP-binding protein LolD (223 aa).

In terms of domain architecture, ABC transporter spans Met1–Ala223. ATP is bound at residue Gly32–Ser39.

Belongs to the ABC transporter superfamily. Lipoprotein translocase (TC 3.A.1.125) family. The complex is composed of two ATP-binding proteins (LolD) and two transmembrane proteins (LolC and LolE).

It localises to the cell inner membrane. Part of the ABC transporter complex LolCDE involved in the translocation of mature outer membrane-directed lipoproteins, from the inner membrane to the periplasmic chaperone, LolA. Responsible for the formation of the LolA-lipoprotein complex in an ATP-dependent manner. The polypeptide is Lipoprotein-releasing system ATP-binding protein LolD (Koribacter versatilis (strain Ellin345)).